A 403-amino-acid chain; its full sequence is O-succinylhomoserine sulfhydrylase (403 aa).

Lysine 219 bears the N6-(pyridoxal phosphate)lysine mark.

The protein belongs to the trans-sulfuration enzymes family. MetZ subfamily. In terms of assembly, homotetramer. It depends on pyridoxal 5'-phosphate as a cofactor.

It catalyses the reaction O-succinyl-L-homoserine + hydrogen sulfide = L-homocysteine + succinate. Its pathway is amino-acid biosynthesis; L-methionine biosynthesis via de novo pathway; L-homocysteine from O-succinyl-L-homoserine: step 1/1. Catalyzes the formation of L-homocysteine from O-succinyl-L-homoserine (OSHS) and hydrogen sulfide. Cannot use the other activated form of L-homoserine, O-acetyl-L-homoserine, as a substrate. The chain is O-succinylhomoserine sulfhydrylase from Pseudomonas aeruginosa (strain ATCC 15692 / DSM 22644 / CIP 104116 / JCM 14847 / LMG 12228 / 1C / PRS 101 / PAO1).